The chain runs to 2073 residues: Non-reducing polyketide synthase cla3 (2073 aa).

The interval 9–242 is N-terminal acylcarrier protein transacylase domain (SAT); that stretch reads LLFGDYTEPW…EKLNIHALQH (234 aa). The region spanning 363 to 793 is the Ketosynthase family 3 (KS3) domain; the sequence is SGRIAIVGMS…GGNGCLLLEE (431 aa). Residues C538, H673, and H712 each act as for beta-ketoacyl synthase activity in the active site. A malonyl-CoA:ACP transacylase (MAT) domain region spans residues 898–1198; sequence TFTGQGSQYA…KIMSTLDATG (301 aa). S987 (for acyl/malonyl transferase activity) is an active-site residue. Residues 1276 to 1590 form a product template (PT) domain region; sequence STCAQYVITE…QNVILERLLG (315 aa). Residues 1279 to 1420 form an N-terminal hotdog fold region; that stretch reads AQYVITETKT…AGLESQWEKS (142 aa). The PKS/mFAS DH domain maps to 1279–1586; the sequence is AQYVITETKT…FHRVQNVILE (308 aa). The Proton acceptor; for dehydratase activity role is filled by H1311. Positions 1439–1586 are C-terminal hotdog fold; sequence QGHRIQRDIY…FHRVQNVILE (148 aa). The Proton donor; for dehydratase activity role is filled by D1500. The tract at residues 1594–1637 is disordered; sequence SSSVPAQASDPLRSKRSPQEARSLPGEAKTEKPGSTIATTSPVL. One can recognise a Carrier domain in the interval 1641 to 1718; the sequence is KSEQGMFQAL…NLRCAFDEDV (78 aa). S1678 bears the O-(pantetheine 4'-phosphoryl)serine mark. The span at 1721 to 1738 shows a compositional bias: polar residues; the sequence is EFTDSEVTSGTPNSSESV. The interval 1721 to 1786 is disordered; it reads EFTDSEVTSG…GVLDDGSPQP (66 aa). Residues 1747–1774 are compositionally biased toward basic and acidic residues; the sequence is PEEHAFKEPKDDSPLARRDMDNSNDRSL. The segment at 1805-1950 is thioesterase (TE) domain; sequence FLIADGSGSI…MQQHLRAIFK (146 aa). The active-site For thioesterase activity is the H2058.

It functions in the pathway secondary metabolite biosynthesis. Functionally, highly reducing polyketide synthase; part of the gene cluster that mediates the biosynthesis of cladosporin, a tricyclic octaketide that acts as an antimalarial agent though inhibition of the Plasmodium falciparum lysyl-tRNA synthetase. The highly reducing polyketide synthase cla2 is responsible for biosynthesis up to the pentaketide stage, including of the tetrahydropyran (THP) ring, whereas the three subsequent ketide extensions with no reduction are catalyzed by the non-reducing polyketide synthase cla3. The sequence is that of Non-reducing polyketide synthase cla3 from Cladosporium cladosporioides.